A 936-amino-acid polypeptide reads, in one-letter code: Lipoxygenase 2.1, chloroplastic (936 aa).

Residues 1 to 69 (MLTATKPLVG…LSADSNGAAV (69 aa)) form a disordered region. Residues 47–59 (STSTSTTTTTTTT) show a composition bias toward low complexity. One can recognise a PLAT domain in the interval 88 to 217 (MKATVTVHMS…CTPDKRVFFP (130 aa)). Positions 220 to 936 (SYLPSQTPKG…EMGIPNSISI (717 aa)) constitute a Lipoxygenase domain. The segment at 264–308 (LGNPDDDNNPTTRPVLGGKEHPYPRRCRTGRPRSKKDPFSEERSH) is disordered. Basic residues predominate over residues 287-297 (PRRCRTGRPRS). A compositionally biased stretch (basic and acidic residues) spans 298 to 308 (KKDPFSEERSH). Positions 587, 592, 777, 781, and 936 each coordinate Fe cation.

It belongs to the lipoxygenase family. Fe cation is required as a cofactor. Post-translationally, the N-terminus is blocked.

The protein resides in the plastid. Its subcellular location is the chloroplast. The enzyme catalyses (9Z,12Z)-octadecadienoate + O2 = (13S)-hydroperoxy-(9Z,11E)-octadecadienoate. It carries out the reaction (9Z,12Z,15Z)-octadecatrienoate + O2 = (13S)-hydroperoxy-(9Z,11E,15Z)-octadecatrienoate. It participates in lipid metabolism; oxylipin biosynthesis. Functionally, plant lipoxygenase may be involved in a number of diverse aspects of plant physiology including growth and development, pest resistance, and senescence or responses to wounding. This enzyme is possibly involved in jasmonic acid synthesis. It exhibits linoleate 13-lipoxygenase and arachidonate 15-lipoxygenase activity. This chain is Lipoxygenase 2.1, chloroplastic (LOX2.1), found in Hordeum vulgare (Barley).